Here is a 586-residue protein sequence, read N- to C-terminus: Malonate--CoA ligase ACSF3, mitochondrial (586 aa).

The transit peptide at 1-89 (MPLPYVGMAL…SREICQLRAC (89 aa)) directs the protein to the mitochondrion. ATP-binding positions include 203–211 (TSGTTGRPK), Asp-457, Arg-471, and Lys-563.

It belongs to the ATP-dependent AMP-binding enzyme family.

The protein resides in the mitochondrion. The catalysed reaction is tetracosanoate + ATP + CoA = tetracosanoyl-CoA + AMP + diphosphate. It carries out the reaction malonate + ATP + CoA = malonyl-CoA + AMP + diphosphate. Functionally, catalyzes the initial reaction in intramitochondrial fatty acid synthesis, by activating malonate and methylmalonate, but not acetate, into their respective CoA thioester. May have some preference toward very-long-chain substrates. In Bos taurus (Bovine), this protein is Malonate--CoA ligase ACSF3, mitochondrial.